The chain runs to 265 residues: Interleukin-2 receptor subunit alpha (265 aa).

The N-terminal stretch at 1–21 is a signal peptide; it reads MDSYLLMWGLLTLIMVPGCFA. One can recognise a Sushi 1 domain in the interval 22-84; it reads ELCDDDPPEI…SWDNQCQCTS (63 aa). Topologically, residues 22–240 are extracellular; the sequence is ELCDDDPPEI…ETFIFTTEYQ (219 aa). Cystine bridges form between Cys-24–Cys-67, Cys-49–Cys-80, and Cys-51–Cys-82. 2 N-linked (GlcNAc...) asparagine glycosylation sites follow: Asn-70 and Asn-89. Residues 87–98 are compositionally biased toward polar residues; sequence TRNTTKQVTPQP. The segment at 87-123 is disordered; sequence TRNTTKQVTPQPEEQKERKTTEMQSPMQPVDQASLPG. Residues 123-186 enclose the Sushi 2 domain; it reads GHCREPPPWE…WTQPQLICTG (64 aa). 2 disulfide bridges follow: Cys-125-Cys-168 and Cys-152-Cys-184. The interval 190–210 is disordered; sequence TSQFPGEEKPQASPEGRPESE. Residues 195–209 show a composition bias toward basic and acidic residues; the sequence is GEEKPQASPEGRPES. The chain crosses the membrane as a helical span at residues 241-259; that stretch reads VAVAGCVFLLISVLLLSGL. The Cytoplasmic portion of the chain corresponds to 260 to 265; it reads TWQRRQ.

As to quaternary structure, non-covalent dimer of an alpha and a beta subunit. IL2R exists in 3 different forms: a high affinity dimer, an intermediate affinity monomer (beta subunit), and a low affinity monomer (alpha subunit). The high and intermediate affinity forms also associate with a gamma subunit.

The protein resides in the membrane. Functionally, receptor for interleukin-2. The receptor is involved in the regulation of immune tolerance by controlling regulatory T cells (TREGs) activity. TREGs suppress the activation and expansion of autoreactive T-cells. This chain is Interleukin-2 receptor subunit alpha (IL2RA), found in Pan troglodytes (Chimpanzee).